Consider the following 406-residue polypeptide: Tryptophan 2,3-dioxygenase (406 aa).

Serine 19 carries the phosphoserine modification. Substrate contacts are provided by residues 72–76 (FIITH) and arginine 144. Histidine 328 is a heme binding site. Threonine 342 contributes to the substrate binding site.

The protein belongs to the tryptophan 2,3-dioxygenase family. As to quaternary structure, homotetramer. Dimer of dimers. Heme serves as cofactor. As to expression, liver.

It catalyses the reaction L-tryptophan + O2 = N-formyl-L-kynurenine. It functions in the pathway amino-acid degradation; L-tryptophan degradation via kynurenine pathway; L-kynurenine from L-tryptophan: step 1/2. Functionally, heme-dependent dioxygenase that catalyzes the oxidative cleavage of the L-tryptophan (L-Trp) pyrrole ring and converts L-tryptophan to N-formyl-L-kynurenine. Catalyzes the oxidative cleavage of the indole moiety. This chain is Tryptophan 2,3-dioxygenase, found in Rattus norvegicus (Rat).